The following is a 545-amino-acid chain: Probable acyl-activating enzyme 4 (545 aa).

Belongs to the ATP-dependent AMP-binding enzyme family. In terms of tissue distribution, expressed in roots, leaves, stems, flowers and developing seeds.

In terms of biological role, may act as an acid--thiol ligase that activates carboxylic acids by forming acyl-CoAs. The sequence is that of Probable acyl-activating enzyme 4 (AEE4) from Arabidopsis thaliana (Mouse-ear cress).